A 223-amino-acid polypeptide reads, in one-letter code: Cytidylate kinase (223 aa).

Residue 17 to 25 participates in ATP binding; the sequence is GPTASGKGT.

The protein belongs to the cytidylate kinase family. Type 1 subfamily.

Its subcellular location is the cytoplasm. The catalysed reaction is CMP + ATP = CDP + ADP. The enzyme catalyses dCMP + ATP = dCDP + ADP. This is Cytidylate kinase from Bordetella pertussis (strain Tohama I / ATCC BAA-589 / NCTC 13251).